The following is a 532-amino-acid chain: MDITTTEIYHDDHHTPHGWKRWLFSTNHKDIGIMYIIFAVFAGIVGGLFSLLFRLELAMPGGTFLNHDFQLYNVLITAHAVIMVFFMIMPALFGGFGNYFVPLLIGAPDMAFPRLNNISFWLLVTAFILLMGSAFVDGGPGTGWTLYPPLSNLSGHPGAAVDMAIFSLHLTGLSSILGSINLIVTIFNMRAPGMGLFKMPLFVWSILVTAFLIILAMPVLGGAITMLLTDRNFGTNFFKPDGGGDPVLFQHLFWFFGHPEVYIVILPGFGIVSQVISTFSRKPIFGYQGMVGAMVIIGFVGFIVWAHHMFTVGLSYNALIYFTAGTMIIAVPTGIKIFSWIATMWGGSITFPTPMLFSIGFIILFTIGGVTGIILSNSALDRVLHDTYYVVAHFHYTMSLGALFTAFAGFYYWFGKISGKQYPEILGKIHFWITFIGVNLTFFPQHFLGLAGMPRRIPDYPEAFAGWNMVSSIGAGISMAAALYFVFIVFYTLKYGKDCPNNPWGDGADTLEWTLTSPPPFHTFETPPHIEG.

8 helical membrane passes run 33 to 53 (IMYIIFAVFAGIVGGLFSLLF), 74 to 94 (VLITAHAVIMVFFMIMPALFG), 95 to 115 (GFGNYFVPLLIGAPDMAFPRL), 118 to 138 (ISFWLLVTAFILLMGSAFVDG), 163 to 183 (MAIFSLHLTGLSSILGSINLI), 200 to 220 (PLFVWSILVTAFLIILAMPVL), 252 to 272 (LFWFFGHPEVYIVILPGFGIV), and 284 to 304 (IFGYQGMVGAMVIIGFVGFIV). Histidine 79 contributes to the Fe(II)-heme a binding site. Cu cation contacts are provided by histidine 258 and tyrosine 262. Residues histidine 307 and histidine 308 each contribute to the Cu cation site. 2 helical membrane passes run 318–338 (ALIYFTAGTMIIAVPTGIKIF) and 355–375 (MLFSIGFIILFTIGGVTGIIL). Residue histidine 393 coordinates heme a3. A run of 3 helical transmembrane segments spans residues 394–414 (FHYTMSLGALFTAFAGFYYWF), 431–451 (FWITFIGVNLTFFPQHFLGLA), and 473–493 (IGAGISMAAALYFVFIVFYTL). A Fe(II)-heme a-binding site is contributed by histidine 395.

It belongs to the heme-copper respiratory oxidase family.

The protein localises to the cell membrane. The catalysed reaction is 4 Fe(II)-[cytochrome c] + O2 + 8 H(+)(in) = 4 Fe(III)-[cytochrome c] + 2 H2O + 4 H(+)(out). It participates in energy metabolism; oxidative phosphorylation. Its function is as follows. Cytochrome c oxidase is the component of the respiratory chain that catalyzes the reduction of oxygen to water. Subunits 1-3 form the functional core of the enzyme complex. CO I is the catalytic subunit of the enzyme. Electrons originating in cytochrome c are transferred via the copper A center of subunit 2 and heme A of subunit 1 to the bimetallic center formed by heme A3 and copper B. The chain is Probable cytochrome c oxidase subunit 1 (ctaD) from Rickettsia felis (strain ATCC VR-1525 / URRWXCal2) (Rickettsia azadi).